The following is a 377-amino-acid chain: Chaperone protein DnaJ (377 aa).

The J domain maps to 5-70 (DYYEVLGVGR…NKKAAYDQFG (66 aa)). Residues 133–211 (GLTKELRIPT…CHGDGRVEKT (79 aa)) form a CR-type zinc finger. Residues Cys-146, Cys-149, Cys-163, Cys-166, Cys-185, Cys-188, Cys-199, and Cys-202 each coordinate Zn(2+). CXXCXGXG motif repeat units follow at residues 146–153 (CDVCDGSG), 163–170 (CGTCHGQG), 185–192 (CPTCHGRG), and 199–206 (CTKCHGDG).

The protein belongs to the DnaJ family. In terms of assembly, homodimer. The cofactor is Zn(2+).

It localises to the cytoplasm. In terms of biological role, participates actively in the response to hyperosmotic and heat shock by preventing the aggregation of stress-denatured proteins and by disaggregating proteins, also in an autonomous, DnaK-independent fashion. Unfolded proteins bind initially to DnaJ; upon interaction with the DnaJ-bound protein, DnaK hydrolyzes its bound ATP, resulting in the formation of a stable complex. GrpE releases ADP from DnaK; ATP binding to DnaK triggers the release of the substrate protein, thus completing the reaction cycle. Several rounds of ATP-dependent interactions between DnaJ, DnaK and GrpE are required for fully efficient folding. Also involved, together with DnaK and GrpE, in the DNA replication of plasmids through activation of initiation proteins. This Shewanella sp. (strain MR-4) protein is Chaperone protein DnaJ.